A 2253-amino-acid polypeptide reads, in one-letter code: Polycystin family receptor for egg jelly (2253 aa).

The N-terminal stretch at 1-19 (MRPGPALLLLGVGLSLSVG) is a signal peptide. At 20 to 1184 (RLPLPPVPRG…NIIKSLHQNP (1165 aa)) the chain is on the extracellular side. Residues 154–169 (RPASPAARVSPRSAAP) are compositionally biased toward low complexity. The segment at 154–177 (RPASPAARVSPRSAAPGPRPQQGF) is disordered. N-linked (GlcNAc...) asparagine glycosylation is found at Asn197, Asn242, Asn295, Asn306, Asn345, Asn349, Asn481, Asn674, Asn849, Asn890, Asn923, Asn939, Asn958, and Asn965. The region spanning 215 to 913 (CVIQRVRINT…STMFCDFTND (699 aa)) is the REJ domain. Residues 1185–1205 (VTLFTVLFIILLYVGLAFWAL) traverse the membrane as a helical segment. The Cytoplasmic segment spans residues 1206 to 1389 (YRDEMDQHLR…VAKTFNRLQR (184 aa)). Residues 1230-1347 (LCYLVTIFTG…TLDRTFHVTH (118 aa)) enclose the PLAT domain. The helical transmembrane segment at 1390-1410 (LSCCLAMLLSSLLCNIMFFNL) threads the bilayer. The Extracellular portion of the chain corresponds to 1411–1427 (NRQEQTESRERKYMRSM). Residues 1428–1448 (MIGIESVLITIPVQLLITFLF) form a helical membrane-spanning segment. Residues 1449-1576 (TCSQRKPQAD…KPRIVLPWWC (128 aa)) lie on the Cytoplasmic side of the membrane. Positions 1494-1562 (PREVAKPASK…EQHPSQKDLQ (69 aa)) are disordered. Residues 1517-1527 (SKPKHRHRKAQ) are compositionally biased toward basic residues. Over residues 1549–1558 (DVHSEQHPSQ) the composition is skewed to basic and acidic residues. The helical transmembrane segment at 1577 to 1597 (VYVAWFLVFATSSISSFFIVF) threads the bilayer. Over 1598 to 1607 (YGLTYGYDKS) the chain is Extracellular. A helical membrane pass occupies residues 1608–1628 (IEWLFASFCSFCQSVLLVQPS). Topologically, residues 1629–1708 (KIILLSGFRT…RKKRIKRRAL (80 aa)) are cytoplasmic. The chain crosses the membrane as a helical span at residues 1709-1729 (LFLSYILTHFIFLALLLILIV). The Extracellular segment spans residues 1730-1966 (LLRHTDCFYY…FDRKASAEIY (237 aa)). Residues Asn1836, Asn1893, and Asn1944 are each glycosylated (N-linked (GlcNAc...) asparagine). A helical membrane pass occupies residues 1967 to 1987 (LYVAILIFFLAYVVDEGCIIM). Residues 1988 to 1996 (QERASYVRS) are Cytoplasmic-facing. A helical transmembrane segment spans residues 1997 to 2017 (VYNLLNFALKCIFTVLIVLFL). Residues 2018–2042 (RKHFLATGIIRFYLSNPEDFIPFHA) are Extracellular-facing. A helical membrane pass occupies residues 2043-2063 (VSQVDHIMRIILGFLLFLTIL). Topologically, residues 2064–2091 (KTLRYSRFFYDVRLAQRAIQAALPGICH) are cytoplasmic. Residues 2092-2112 (MAFVVSVYFFVYMAFGYLVFG) form a helical membrane-spanning segment. At 2113 to 2145 (QHEWNYSNLIHSTQTVFSYCVSAFQNTEFSNNR) the chain is on the extracellular side. A helical membrane pass occupies residues 2146–2166 (ILGVLFLSSFMLVMICVLINL). The Cytoplasmic portion of the chain corresponds to 2167–2253 (FQAVILSAYE…NGKKMVYLVV (87 aa)).

The protein belongs to the polycystin family. As to expression, exclusively expressed in testis.

Its subcellular location is the cell membrane. The protein localises to the cytoplasmic vesicle. It is found in the secretory vesicle. The protein resides in the acrosome membrane. It localises to the nucleus. Testis-specific protein that controls sperm transport and the timing of zona pellucida-evoked exocytosis of the sperm acrosome. In Homo sapiens (Human), this protein is Polycystin family receptor for egg jelly.